Reading from the N-terminus, the 371-residue chain is Chaperone protein DnaJ (371 aa).

Positions 6 to 71 constitute a J domain; sequence DYYEILGVEK…QKRAQYDRFG (66 aa). The interval 104–123 is disordered; it reads GGMGGQQRQRRNRNEPRRGS. The segment at 139 to 217 adopts a CR-type zinc-finger fold; sequence GIEKEIEFDT…CKGKGRVAEH (79 aa). 8 residues coordinate Zn(2+): cysteine 152, cysteine 155, cysteine 169, cysteine 172, cysteine 191, cysteine 194, cysteine 205, and cysteine 208. CXXCXGXG motif repeat units lie at residues 152–159, 169–176, 191–198, and 205–212; these read CDECKGTG, CGTCGGSG, CPTCHGQG, and CKPCKGKG.

Belongs to the DnaJ family. Homodimer. Requires Zn(2+) as cofactor.

It localises to the cytoplasm. In terms of biological role, participates actively in the response to hyperosmotic and heat shock by preventing the aggregation of stress-denatured proteins and by disaggregating proteins, also in an autonomous, DnaK-independent fashion. Unfolded proteins bind initially to DnaJ; upon interaction with the DnaJ-bound protein, DnaK hydrolyzes its bound ATP, resulting in the formation of a stable complex. GrpE releases ADP from DnaK; ATP binding to DnaK triggers the release of the substrate protein, thus completing the reaction cycle. Several rounds of ATP-dependent interactions between DnaJ, DnaK and GrpE are required for fully efficient folding. Also involved, together with DnaK and GrpE, in the DNA replication of plasmids through activation of initiation proteins. The protein is Chaperone protein DnaJ of Bdellovibrio bacteriovorus (strain ATCC 15356 / DSM 50701 / NCIMB 9529 / HD100).